The sequence spans 512 residues: ATP synthase subunit alpha, chloroplastic (512 aa).

Residue 170–177 (GDRQTGKT) participates in ATP binding.

This sequence belongs to the ATPase alpha/beta chains family. In terms of assembly, F-type ATPases have 2 components, CF(1) - the catalytic core - and CF(0) - the membrane proton channel. CF(1) has five subunits: alpha(3), beta(3), gamma(1), delta(1), epsilon(1). CF(0) has four main subunits: a, b, b' and c.

It is found in the plastid. The protein localises to the chloroplast thylakoid membrane. The enzyme catalyses ATP + H2O + 4 H(+)(in) = ADP + phosphate + 5 H(+)(out). In terms of biological role, produces ATP from ADP in the presence of a proton gradient across the membrane. The alpha chain is a regulatory subunit. The chain is ATP synthase subunit alpha, chloroplastic from Staurastrum punctulatum (Green alga).